The following is a 198-amino-acid chain: Na(+)-translocating NADH-quinone reductase subunit E (198 aa).

The next 6 helical transmembrane spans lie at 11–31 (SIFI…FLAV), 39–59 (MGLG…NNLI), 77–97 (FLSF…LEMA), 110–130 (GIFL…SFMV), 140–160 (VVYG…MAGI), and 176–196 (LGIT…FSGI).

This sequence belongs to the NqrDE/RnfAE family. In terms of assembly, composed of six subunits; NqrA, NqrB, NqrC, NqrD, NqrE and NqrF.

The protein resides in the cell inner membrane. The catalysed reaction is a ubiquinone + n Na(+)(in) + NADH + H(+) = a ubiquinol + n Na(+)(out) + NAD(+). In terms of biological role, NQR complex catalyzes the reduction of ubiquinone-1 to ubiquinol by two successive reactions, coupled with the transport of Na(+) ions from the cytoplasm to the periplasm. NqrA to NqrE are probably involved in the second step, the conversion of ubisemiquinone to ubiquinol. This chain is Na(+)-translocating NADH-quinone reductase subunit E, found in Aeromonas hydrophila subsp. hydrophila (strain ATCC 7966 / DSM 30187 / BCRC 13018 / CCUG 14551 / JCM 1027 / KCTC 2358 / NCIMB 9240 / NCTC 8049).